The primary structure comprises 475 residues: ATP synthase subunit beta (475 aa).

An ATP-binding site is contributed by 160–167; sequence GGAGVGKT.

The protein belongs to the ATPase alpha/beta chains family. In terms of assembly, F-type ATPases have 2 components, CF(1) - the catalytic core - and CF(0) - the membrane proton channel. CF(1) has five subunits: alpha(3), beta(3), gamma(1), delta(1), epsilon(1). CF(0) has three main subunits: a(1), b(2) and c(9-12). The alpha and beta chains form an alternating ring which encloses part of the gamma chain. CF(1) is attached to CF(0) by a central stalk formed by the gamma and epsilon chains, while a peripheral stalk is formed by the delta and b chains.

The protein localises to the cell membrane. The catalysed reaction is ATP + H2O + 4 H(+)(in) = ADP + phosphate + 5 H(+)(out). In terms of biological role, produces ATP from ADP in the presence of a proton gradient across the membrane. The catalytic sites are hosted primarily by the beta subunits. The polypeptide is ATP synthase subunit beta (Mycolicibacterium vanbaalenii (strain DSM 7251 / JCM 13017 / BCRC 16820 / KCTC 9966 / NRRL B-24157 / PYR-1) (Mycobacterium vanbaalenii)).